The primary structure comprises 79 residues: Acyl carrier protein (79 aa).

Positions 1–79 (MTKEQILVDV…DVVSYIETQV (79 aa)) constitute a Carrier domain. Serine 39 carries the post-translational modification O-(pantetheine 4'-phosphoryl)serine.

It belongs to the acyl carrier protein (ACP) family. In terms of processing, 4'-phosphopantetheine is transferred from CoA to a specific serine of apo-ACP by AcpS. This modification is essential for activity because fatty acids are bound in thioester linkage to the sulfhydryl of the prosthetic group.

It is found in the cytoplasm. The protein operates within lipid metabolism; fatty acid biosynthesis. Carrier of the growing fatty acid chain in fatty acid biosynthesis. The polypeptide is Acyl carrier protein (Exiguobacterium sibiricum (strain DSM 17290 / CCUG 55495 / CIP 109462 / JCM 13490 / 255-15)).